The sequence spans 183 residues: MAKVRLTTEEIMKIGFFEKIANVPILDCVLNDERVAFIVKEGDVGAAIGKGGENVKTAEEKFGKKVDIIEYSDDWRKFIRNIFAPIQLDDVWVKRVGKDVVAFIKINPKVRRAVFGEKGKNLERALKILKRHTKITKIKVIVENQKFKRKRAKRPVVKDQQQEQTETKQETDVQQDVKETVKE.

Positions 32–98 (DERVAFIVKE…DDVWVKRVGK (67 aa)) constitute a KH domain. Residues 149 to 183 (RKRAKRPVVKDQQQEQTETKQETDVQQDVKETVKE) are disordered. The span at 156–183 (VVKDQQQEQTETKQETDVQQDVKETVKE) shows a compositional bias: basic and acidic residues.

The protein belongs to the NusA family.

The protein localises to the cytoplasm. Participates in transcription termination. This Methanocaldococcus jannaschii (strain ATCC 43067 / DSM 2661 / JAL-1 / JCM 10045 / NBRC 100440) (Methanococcus jannaschii) protein is Probable transcription termination protein NusA.